The sequence spans 176 residues: Dual-action ribosomal maturation protein DarP (176 aa).

Over residues 1–16 (MRLIDPDADLEFDPDS) the composition is skewed to acidic residues. The segment at 1 to 29 (MRLIDPDADLEFDPDSVYDGPSKSQKKRE) is disordered.

This sequence belongs to the DarP family.

It localises to the cytoplasm. Member of a network of 50S ribosomal subunit biogenesis factors which assembles along the 30S-50S interface, preventing incorrect 23S rRNA structures from forming. Promotes peptidyl transferase center (PTC) maturation. The protein is Dual-action ribosomal maturation protein DarP of Thiobacillus denitrificans (strain ATCC 25259 / T1).